Consider the following 375-residue polypeptide: ORC1-type DNA replication protein 3 (375 aa).

ATP contacts are provided by residues 66-70, tyrosine 209, and arginine 221; that span reads TGKTT.

It belongs to the CDC6/cdc18 family.

In terms of biological role, involved in regulation of DNA replication. The polypeptide is ORC1-type DNA replication protein 3 (cdc6c) (Haloarcula marismortui (strain ATCC 43049 / DSM 3752 / JCM 8966 / VKM B-1809) (Halobacterium marismortui)).